Reading from the N-terminus, the 88-residue chain is UPF0335 protein WRi_003770 (88 aa).

The protein belongs to the UPF0335 family.

The sequence is that of UPF0335 protein WRi_003770 from Wolbachia sp. subsp. Drosophila simulans (strain wRi).